Consider the following 374-residue polypeptide: S-adenosylmethionine:tRNA ribosyltransferase-isomerase (374 aa).

This sequence belongs to the QueA family. In terms of assembly, monomer.

The protein localises to the cytoplasm. The catalysed reaction is 7-aminomethyl-7-carbaguanosine(34) in tRNA + S-adenosyl-L-methionine = epoxyqueuosine(34) in tRNA + adenine + L-methionine + 2 H(+). The protein operates within tRNA modification; tRNA-queuosine biosynthesis. Its function is as follows. Transfers and isomerizes the ribose moiety from AdoMet to the 7-aminomethyl group of 7-deazaguanine (preQ1-tRNA) to give epoxyqueuosine (oQ-tRNA). The chain is S-adenosylmethionine:tRNA ribosyltransferase-isomerase from Prochlorococcus marinus (strain AS9601).